The sequence spans 211 residues: ATP phosphoribosyltransferase (211 aa).

The protein belongs to the ATP phosphoribosyltransferase family. Short subfamily. Heteromultimer composed of HisG and HisZ subunits.

It is found in the cytoplasm. It carries out the reaction 1-(5-phospho-beta-D-ribosyl)-ATP + diphosphate = 5-phospho-alpha-D-ribose 1-diphosphate + ATP. It functions in the pathway amino-acid biosynthesis; L-histidine biosynthesis; L-histidine from 5-phospho-alpha-D-ribose 1-diphosphate: step 1/9. Its function is as follows. Catalyzes the condensation of ATP and 5-phosphoribose 1-diphosphate to form N'-(5'-phosphoribosyl)-ATP (PR-ATP). Has a crucial role in the pathway because the rate of histidine biosynthesis seems to be controlled primarily by regulation of HisG enzymatic activity. This Pseudomonas aeruginosa (strain UCBPP-PA14) protein is ATP phosphoribosyltransferase.